The sequence spans 913 residues: MSEVGIQNHKKAVTKPRRREKVIELIEVDGKKVSTTSTGKRKFHNKSKNGCDNCKRRRVKCDEGKPACRKCTNMKLECQYTPIHLRKGRGATVVKYVTRKADGSVESDSSVDLPPTIKKEQTPFNDIQSAVKASGSSNDSFPSSASTTKSESEEKSSAPIEDKNNMTPLSMGLQGTINKKDMMNNFFSQNGTIGFGSPERLNSGIDGLLLPPLPSGNMGAFQLQQQQQVQQQSQPQTQAQQASGTPNERYGSFDLAGSPALQSTGMSLSNSLSGMLLCNRIPSGQNYTQQQLQYQLHQQLQLQQHQQVQLQQYQQLRQEQHQQVQQQQQEQLQQYQQHFLQQQQQVLLQQEQQPNDEEGGVQEENSKKVKEGPLQSQTSETTLNSDAATLQADALSQLSKMGLSLKSLSTFPTAGIGGVSYDFQELLGIKFPINNGNSRATKASNAEEALANMQEHHERAAASVKENDGQLSDTKSPAPSNNAQGGSASIMEPQAADAVSTMAPISMIERNMNRNSNISPSTPSAVLNDRQEMQDSISSLGNLTKAALENNEPTISLQTSQTENEDDASRQDMTSKINNEADRSSVSAGTSNIAKLLDLSTKGNLNLIDMKLFHHYCTKVWPTITAAKVSGPEIWRDYIPELAFDYPFLMHALLAFSATHLSRTETGLEQYVSSHRLDALRLLREAVLEISENNTDALVASALILIMDSLANASGNGTVGNQSLNSMSPSAWIFHVKGAATILTAVWPLSERSKFHNIISVDLSDLGDVINPDVGTITELVCFDESIADLYPVGLDSPYLITLAYLDKLHREKNQGDFILRVFTFPALLDKTFLALLMTGDLGAMRIMRSYYKLLRGFATEVKDKVWFLEGVTQVLPQDVDEYSGGGGMHMMLDFLGGGLPSMTTTNFSDFSL.

Positions 50 to 80 (GCDNCKRRRVKCDEGKPACRKCTNMKLECQY) form a DNA-binding region, zn(2)-C6 fungal-type. Disordered stretches follow at residues 103–173 (GSVE…SMGL) and 216–258 (GNMG…LAGS). A Phosphothreonine modification is found at threonine 122. Residues 150 to 164 (SESEEKSSAPIEDKN) show a composition bias toward basic and acidic residues. Positions 222 to 241 (QLQQQQQVQQQSQPQTQAQQ) are enriched in low complexity. Residues 303–346 (QQHQQVQLQQYQQLRQEQHQQVQQQQQEQLQQYQQHFLQQQQQV) are a coiled coil. Disordered stretches follow at residues 347-385 (LLQQ…TLNS) and 453-489 (MQEH…GSAS). Positions 374 to 385 (LQSQTSETTLNS) are enriched in polar residues. The stretch at 440-472 (ATKASNAEEALANMQEHHERAAASVKENDGQLS) forms a coiled coil. Positions 454–468 (QEHHERAAASVKEND) are enriched in basic and acidic residues. Residues 469–487 (GQLSDTKSPAPSNNAQGGS) show a composition bias toward polar residues. A Phosphoserine modification is found at serine 519. A compositionally biased stretch (polar residues) spans 552 to 562 (EPTISLQTSQT). Residues 552–571 (EPTISLQTSQTENEDDASRQ) form a disordered region.

It is found in the nucleus. In terms of biological role, transcription factor that is involved in activation of anaerobic genes such as DAN/TIR cell wall mannoprotein genes and YML083c. Appears to bind to anaerobic response elements (AR1) with the consensus sequence 5'-TCGTTYAG-3' present in the promoter regions of DAN/TIR genes. Involved in sterol uptake and regulation of the sterol biosynthesis. Binds to sterol regulatory elements (SRE) with the consensus sequence 5'-TCGTATA-3' present in ERG2 and ERG3 promoters. May be involved in down-regulation of CWP2 during anaerobic adaptation. The polypeptide is Sterol uptake control protein 2 (UPC2) (Saccharomyces cerevisiae (strain ATCC 204508 / S288c) (Baker's yeast)).